The sequence spans 219 residues: Tegument protein UL14 (219 aa).

The segment at 159–219 is disordered; the sequence is VHTDAPSRPG…GFARDCPDGE (61 aa). Over residues 186–202 the composition is skewed to pro residues; the sequence is APPPETAPSPEPAPGPA.

Belongs to the alphaherpesvirinae HHV-1 UL14 protein family. Phosphorylated.

Its subcellular location is the virion tegument. The protein resides in the host cytoplasm. It is found in the host nucleus. In terms of biological role, contributes to the nuclear transport of the viral transcriptional activator VP16 during the early phase of infection. Therefore, participates indirectly in the regulation of the immediate-early gene expression. Additionally, seems to be important for efficient nuclear targeting of capsids. This chain is Tegument protein UL14, found in Human herpesvirus 2 (strain HG52) (HHV-2).